A 316-amino-acid polypeptide reads, in one-letter code: HPr kinase/phosphorylase (316 aa).

Active-site residues include H143 and K164. 158 to 165 is an ATP binding site; that stretch reads GEAGSGKS. S165 contributes to the Mg(2+) binding site. The active-site Proton acceptor; for phosphorylation activity. Proton donor; for dephosphorylation activity is the D182. An important for the catalytic mechanism of both phosphorylation and dephosphorylation region spans residues 206–215; it reads LEVRGLGVLN. E207 provides a ligand contact to Mg(2+). Residue R251 is part of the active site. The tract at residues 272 to 277 is important for the catalytic mechanism of dephosphorylation; sequence PVMPGR.

This sequence belongs to the HPrK/P family. Homohexamer. It depends on Mg(2+) as a cofactor.

It catalyses the reaction [HPr protein]-L-serine + ATP = [HPr protein]-O-phospho-L-serine + ADP + H(+). The catalysed reaction is [HPr protein]-O-phospho-L-serine + phosphate + H(+) = [HPr protein]-L-serine + diphosphate. Its function is as follows. Catalyzes the ATP- as well as the pyrophosphate-dependent phosphorylation of a specific serine residue in HPr, a phosphocarrier protein of the phosphoenolpyruvate-dependent sugar phosphotransferase system (PTS). HprK/P also catalyzes the pyrophosphate-producing, inorganic phosphate-dependent dephosphorylation (phosphorolysis) of seryl-phosphorylated HPr (P-Ser-HPr). The polypeptide is HPr kinase/phosphorylase (Xanthomonas axonopodis pv. citri (strain 306)).